We begin with the raw amino-acid sequence, 63 residues long: Small ribosomal subunit protein eS17 (63 aa).

This sequence belongs to the eukaryotic ribosomal protein eS17 family.

The protein is Small ribosomal subunit protein eS17 (rps17e) of Haloarcula marismortui (strain ATCC 43049 / DSM 3752 / JCM 8966 / VKM B-1809) (Halobacterium marismortui).